The sequence spans 292 residues: Ribosomal RNA small subunit methyltransferase A (292 aa).

The S-adenosyl-L-methionine site is built by Asn28, Leu30, Gly55, Glu77, Asp103, and Asn123.

This sequence belongs to the class I-like SAM-binding methyltransferase superfamily. rRNA adenine N(6)-methyltransferase family. RsmA subfamily.

The protein localises to the cytoplasm. The enzyme catalyses adenosine(1518)/adenosine(1519) in 16S rRNA + 4 S-adenosyl-L-methionine = N(6)-dimethyladenosine(1518)/N(6)-dimethyladenosine(1519) in 16S rRNA + 4 S-adenosyl-L-homocysteine + 4 H(+). Functionally, specifically dimethylates two adjacent adenosines (A1518 and A1519) in the loop of a conserved hairpin near the 3'-end of 16S rRNA in the 30S particle. May play a critical role in biogenesis of 30S subunits. The chain is Ribosomal RNA small subunit methyltransferase A from Methylobacterium radiotolerans (strain ATCC 27329 / DSM 1819 / JCM 2831 / NBRC 15690 / NCIMB 10815 / 0-1).